Reading from the N-terminus, the 356-residue chain is C-C chemokine receptor 1-like protein 1 (356 aa).

The Extracellular segment spans residues 1-32 (MEIPAVTEPSYNTVAKNDFMSGFLCFSINVRA). Residues 33 to 60 (FGITVLTPLYSLVFIIGVIGHVLVVLVL) form a helical membrane-spanning segment. Topologically, residues 61-67 (IQHKRLR) are cytoplasmic. The chain crosses the membrane as a helical span at residues 68–92 (NMTSIYLFNLAISDLVFLSTLPFWV). Residues 93–108 (DYIMKGDWIFGNAMCK) lie on the Extracellular side of the membrane. An intrachain disulfide couples Cys-107 to Cys-184. The helical transmembrane segment at 109–130 (FVSGFYYLGLYSDMFFITLLTI) threads the bilayer. Over 131-147 (DRYLAVVHVVFALRART) the chain is Cytoplasmic. The chain crosses the membrane as a helical span at residues 148–172 (VTFGIISSIITWVLAALVSIPCLYV). The Extracellular portion of the chain corresponds to 173–198 (FKSQMEFTYHTCRAILPRKSLIRFLR). A helical transmembrane segment spans residues 199-224 (FQALTMNILGLILPLLAMIICYTRII). Over 225–240 (NVLHRRPNKKKAKVMR) the chain is Cytoplasmic. Residues 241–265 (LIFVITLLFFLLLAPYYLAAFVSAF) form a helical membrane-spanning segment. The Extracellular portion of the chain corresponds to 266 to 282 (EDVLFTPSCLRSQQVDL). A helical membrane pass occupies residues 283 to 306 (SLMITEALAYTHCCVNPVIYVFVG). Topologically, residues 307–356 (KRFRKYLWQLFRRHTAITLPQWLPFLSVDRAQRASATPPSTVEIETSADL) are cytoplasmic.

This sequence belongs to the G-protein coupled receptor 1 family. In terms of tissue distribution, detected in the spleen, liver and leukocytes.

It localises to the cell membrane. Functionally, probable receptor for a C-C type chemokine. This is C-C chemokine receptor 1-like protein 1 (Ccr1l1) from Mus musculus (Mouse).